Consider the following 561-residue polypeptide: Rho guanine nucleotide exchange factor 9 (561 aa).

An SH3 domain is found at 53-112; it reads DSIVSAEAVWDHVTMANRELAFKAGDVIKVLDASNKDWWWGQIDDEEGWFPASFVRLWVN. The interval 145 to 155 is interaction with GPHN; that stretch reads RDQMRANVINE. The DH domain occupies 148-332; the sequence is MRANVINEIM…RNVTQQINER (185 aa). One can recognise a PH domain in the interval 363-470; that stretch reads ELIYTGEMAW…WLRAFREERK (108 aa). The interval 499–524 is disordered; it reads KQKGVNSARSVPPSYPPPQDPLNQGQ. Ser547 is modified (phosphoserine).

As to quaternary structure, interacts with GPHN.

The protein resides in the cytoplasm. It localises to the postsynaptic density. Its function is as follows. Acts as a guanine nucleotide exchange factor (GEF) for CDC42. Promotes formation of GPHN clusters. In Bos taurus (Bovine), this protein is Rho guanine nucleotide exchange factor 9 (ARHGEF9).